A 353-amino-acid polypeptide reads, in one-letter code: Probable tRNA pseudouridine synthase B (353 aa).

D45 acts as the Nucleophile in catalysis. In terms of domain architecture, PUA spans 211–287; it reads YPKIVAKKSA…DHIFVEAKHG (77 aa). Positions 292–353 are disordered; sequence VRDREKDVQR…TGVHRRPGSH (62 aa). Basic and acidic residues predominate over residues 309–328; the sequence is NIRDAAHGPDSRTGRGRKET. The span at 336–353 shows a compositional bias: basic residues; that stretch reads RVRKLQNKTGVHRRPGSH.

The protein belongs to the pseudouridine synthase TruB family. Type 2 subfamily.

The catalysed reaction is uridine(55) in tRNA = pseudouridine(55) in tRNA. Could be responsible for synthesis of pseudouridine from uracil-55 in the psi GC loop of transfer RNAs. The sequence is that of Probable tRNA pseudouridine synthase B from Thermoplasma volcanium (strain ATCC 51530 / DSM 4299 / JCM 9571 / NBRC 15438 / GSS1).